Reading from the N-terminus, the 353-residue chain is Photosystem II protein D1 (353 aa).

The residue at position 2 (Thr-2) is an N-acetylthreonine. At Thr-2 the chain carries Phosphothreonine. 3 consecutive transmembrane segments (helical) span residues 29 to 46, 118 to 133, and 142 to 156; these read YIGW…TATS, HFLL…EWEL, and WIAV…AATA. His-118 is a binding site for chlorophyll a. Residue Tyr-126 coordinates pheophytin a. [CaMn4O5] cluster contacts are provided by Asp-170 and Glu-189. A helical membrane pass occupies residues 197-218; that stretch reads FHMLGVAGVFGGSLFSAMHGSL. His-198 contributes to the chlorophyll a binding site. Residues His-215 and 264–265 contribute to the a quinone site; that span reads SF. His-215 is a Fe cation binding site. A Fe cation-binding site is contributed by His-272. A helical transmembrane segment spans residues 274–288; the sequence is FLAAWPVIGIWFTSL. [CaMn4O5] cluster-binding residues include His-332, Glu-333, Asp-342, and Ala-344. A propeptide spanning residues 345-353 is cleaved from the precursor; that stretch reads AVEAPSTIG.

The protein belongs to the reaction center PufL/M/PsbA/D family. As to quaternary structure, PSII is composed of 1 copy each of membrane proteins PsbA, PsbB, PsbC, PsbD, PsbE, PsbF, PsbH, PsbI, PsbJ, PsbK, PsbL, PsbM, PsbT, PsbX, PsbY, PsbZ, Psb30/Ycf12, at least 3 peripheral proteins of the oxygen-evolving complex and a large number of cofactors. It forms dimeric complexes. The D1/D2 heterodimer binds P680, chlorophylls that are the primary electron donor of PSII, and subsequent electron acceptors. It shares a non-heme iron and each subunit binds pheophytin, quinone, additional chlorophylls, carotenoids and lipids. D1 provides most of the ligands for the Mn4-Ca-O5 cluster of the oxygen-evolving complex (OEC). There is also a Cl(-1) ion associated with D1 and D2, which is required for oxygen evolution. The PSII complex binds additional chlorophylls, carotenoids and specific lipids. serves as cofactor. In terms of processing, tyr-161 forms a radical intermediate that is referred to as redox-active TyrZ, YZ or Y-Z. C-terminally processed by CTPA; processing is essential to allow assembly of the oxygen-evolving complex and thus photosynthetic growth.

The protein resides in the plastid. It is found in the chloroplast thylakoid membrane. The catalysed reaction is 2 a plastoquinone + 4 hnu + 2 H2O = 2 a plastoquinol + O2. Functionally, photosystem II (PSII) is a light-driven water:plastoquinone oxidoreductase that uses light energy to abstract electrons from H(2)O, generating O(2) and a proton gradient subsequently used for ATP formation. It consists of a core antenna complex that captures photons, and an electron transfer chain that converts photonic excitation into a charge separation. The D1/D2 (PsbA/PsbD) reaction center heterodimer binds P680, the primary electron donor of PSII as well as several subsequent electron acceptors. The polypeptide is Photosystem II protein D1 (Landoltia punctata (Dotted duckmeat)).